The following is a 591-amino-acid chain: Alternative cytochrome c oxidase subunit 1 (591 aa).

Residues 40-60 (VIAIQYSLTASAIGLVALVLS) traverse the membrane as a helical segment. His88 is a heme b binding site. 11 consecutive transmembrane segments (helical) span residues 90–110 (MIMVIYLLTALFLGGFGNYLI), 126–146 (MLSYWVYLLAVLVLASAFFVP), 172–192 (GIVLMLSSLILFIIGFTMGGL), 215–235 (VWGIFTATVMALLAFPALFVG), 274–294 (LFWFFGHPEVYIVALPAFGIV), 313–333 (VWAIVAIGALSFVVWAHHMYV), 337–357 (YPYFGFFFATTTLIIAIPTAI), 377–397 (MLFALGFIITFVNGGLTGLFL), 412–432 (VVAHFHMVMGVAPIMVVLGAI), 453–473 (FWVTFLGAYLIFFPMHYLGLL), and 498–518 (FITVVALTVGFAQMVFLFNLV). Cu cation contacts are provided by His280, Tyr284, His329, and His330. A cross-link (1'-histidyl-3'-tyrosine (His-Tyr)) is located at residues 280-284 (HPEVY). Positions 415 and 417 each coordinate heme b.

It belongs to the heme-copper respiratory oxidase family. This alternate cytochrome c oxidase consists of a subunit I and two cytochromes c. Equivalents to subunit 2 and 3 are not present in this complex.

It is found in the cell membrane. It carries out the reaction 4 Fe(II)-[cytochrome c] + O2 + 8 H(+)(in) = 4 Fe(III)-[cytochrome c] + 2 H2O + 4 H(+)(out). In terms of biological role, cytochrome c oxidase is the component of the respiratory chain that catalyzes the reduction of oxygen to water. Subunits 1-3 form the functional core of the enzyme complex. Co I is the catalytic subunit of the enzyme. Electrons originating in cytochrome c are transferred via the copper A center of subunit 2 and a low-spin heme of subunit 1 to the bimetallic center formed by a high-spin heme and copper B. This is Alternative cytochrome c oxidase subunit 1 (coxN) from Bradyrhizobium diazoefficiens (strain JCM 10833 / BCRC 13528 / IAM 13628 / NBRC 14792 / USDA 110).